The sequence spans 181 residues: MQYIPLKEKYENEIKPAMMKEFGYKNIHQVPRLEKIVINMGIGEGSRNKDVIDIHAKELALIAGQKPVVTKAKKSISNFKIRKGMPIGLKVTLRGVNMYNFLYKLINLVLPKVRDFRGLNPNGFDGRGNYSFGLTEQLVFPEISPDQVRRVQGMDIVIVTTAKTDDEARKLLELFGFPFKR.

Belongs to the universal ribosomal protein uL5 family. Part of the 50S ribosomal subunit; part of the 5S rRNA/L5/L18/L25 subcomplex. Contacts the 5S rRNA and the P site tRNA. Forms a bridge to the 30S subunit in the 70S ribosome.

In terms of biological role, this is one of the proteins that bind and probably mediate the attachment of the 5S RNA into the large ribosomal subunit, where it forms part of the central protuberance. In the 70S ribosome it contacts protein S13 of the 30S subunit (bridge B1b), connecting the 2 subunits; this bridge is implicated in subunit movement. Contacts the P site tRNA; the 5S rRNA and some of its associated proteins might help stabilize positioning of ribosome-bound tRNAs. The chain is Large ribosomal subunit protein uL5 from Thermosipho africanus (strain TCF52B).